The primary structure comprises 430 residues: Mannan endo-1,4-beta-mannosidase (430 aa).

Glutamate 173 acts as the Proton donor in catalysis. The active-site Nucleophile is glutamate 269. CBM10 domains are found at residues 357–390 and 395–424; these read SCGTAPNGYPYCCNASSATGNGWGWENNRSCVVA and SCNWYGTSYPICVNTSSGWGWENNRSCIAA.

The protein belongs to the glycosyl hydrolase 5 (cellulase A) family.

It carries out the reaction Random hydrolysis of (1-&gt;4)-beta-D-mannosidic linkages in mannans, galactomannans and glucomannans.. Catalyzes the endo hydrolysis of beta-1,4-linked mannan, galactomannan and glucomannan. It is able to hydrolyze mannosidic linkages that are flanked by mannose or glucose. The sequence is that of Mannan endo-1,4-beta-mannosidase from Cellvibrio japonicus (strain Ueda107) (Pseudomonas fluorescens subsp. cellulosa).